We begin with the raw amino-acid sequence, 161 residues long: MPSFDIMSEVDLPSLKNAVDVANRKISGRYDFKGSDARVEQGEKVLTLFGDSDFQIDQMRQILLPEMTSKKIDVRCLEYGDLQKIGGNKLKQELKVRVGVEQDLAKKIVKLLKDSKLKVQAAIQGEAIRVSGAKRDILQEAIALVKKEITDFPLQFGNFRD.

This sequence belongs to the YajQ family.

Functionally, nucleotide-binding protein. The polypeptide is Nucleotide-binding protein AZOSEA28950 (Aromatoleum aromaticum (strain DSM 19018 / LMG 30748 / EbN1) (Azoarcus sp. (strain EbN1))).